Reading from the N-terminus, the 634-residue chain is Formate--tetrahydrofolate ligase (634 aa).

78–85 lines the ATP pocket; it reads TPLGEGKS.

The protein belongs to the formate--tetrahydrofolate ligase family. As to quaternary structure, homodimer.

It catalyses the reaction (6S)-5,6,7,8-tetrahydrofolate + formate + ATP = (6R)-10-formyltetrahydrofolate + ADP + phosphate. It participates in one-carbon metabolism; tetrahydrofolate interconversion. This is Formate--tetrahydrofolate ligase (THFS) from Arabidopsis thaliana (Mouse-ear cress).